The chain runs to 647 residues: uncharacterized protein (647 aa).

5 consecutive transmembrane segments (helical) span residues 14 to 38 (LFPIFTFVLINLIILSLSRLGLAVW), 61 to 78 (VVALCYLFGVPALLTTLF), 90 to 110 (LWLTFGSVFIIFMEIATPAFI), 140 to 158 (LSAVIFSLVFTILAAVIYW), and 178 to 195 (VIALLVIVVSFLGARSSF).

The protein resides in the cell membrane. This is an uncharacterized protein from Haemophilus influenzae (strain ATCC 51907 / DSM 11121 / KW20 / Rd).